The following is a 469-amino-acid chain: Zinc transporter SLC39A7 (469 aa).

Residues 10–30 (WVAVGLLTWATLGLLVAELGG) form a helical membrane-spanning segment. Basic and acidic residues-rich tracts occupy residues 42–56 (FHGH…DFHH) and 66–114 (HTHE…EHSR). Residues 42–121 (FHGHSHRHSH…HSRGGYGESG (80 aa)) form a disordered region. At His-66 the chain carries Pros-methylhistidine. The next 3 helical transmembrane spans lie at 138-158 (ALGA…LIPV), 169-189 (LQIL…LHLI), and 214-234 (GPIL…LVVE). Positions 242 to 263 (GGHGHSHGHGHAHSHTHGSHGH) are enriched in basic residues. The interval 242-310 (GGHGHSHGHG…VRPQNAEEEK (69 aa)) is disordered. The segment covering 264–285 (GRQECSTKEKQSSEEEEKETRG) has biased composition (basic and acidic residues). Phosphoserine is present on residues Ser-275 and Ser-276. The next 3 helical transmembrane spans lie at 386–406 (LTAV…GGAV), 410–430 (IAGG…FIYV), and 448–468 (SLLE…IAHL).

This sequence belongs to the ZIP transporter (TC 2.A.5) family. KE4/Catsup subfamily. As to quaternary structure, homodimer. In terms of processing, methylation at some His residue by METTL9 leads to reduced zinc-binding. Post-translationally, rapidly phosphorylated by CK2 following Zn(2+) treatment. This phosphorylation is required for efficient cytosolic Zn(2+) release.

It is found in the endoplasmic reticulum membrane. Its subcellular location is the golgi apparatus. The protein resides in the cis-Golgi network membrane. It catalyses the reaction Zn(2+)(in) = Zn(2+)(out). Transports Zn(2+) from the endoplasmic reticulum (ER)/Golgi apparatus to the cytosol, playing an essential role in the regulation of cytosolic zinc levels. Acts as a gatekeeper of zinc release from intracellular stores, requiring post-translational activation by phosphorylation, resulting in activation of multiple downstream pathways leading to cell growth and proliferation. Has an essential role in B cell development and is required for proper B cell receptor signaling. Plays an important role in maintaining intestinal epithelial homeostasis and skin dermis development by regulating ER function. Controls cell signaling pathways involved in glucose metabolism in skeletal muscle. Has a protective role against ER stress in different biological contexts. Mediates Zn(2+)-induced ferroptosis. In Pongo abelii (Sumatran orangutan), this protein is Zinc transporter SLC39A7.